A 79-amino-acid polypeptide reads, in one-letter code: CDC42 small effector protein 1 (79 aa).

2 S-palmitoyl cysteine lipidation sites follow: C10 and C11. The CRIB domain occupies 30 to 43 (IGEPMNFVHLTHIG). A disordered region spans residues 48–79 (GAGDGLAMTGAVQEQMRSKGNRDRPWSNSRGL). Residues 63–72 (MRSKGNRDRP) show a composition bias toward basic and acidic residues.

This sequence belongs to the CDC42SE/SPEC family. In terms of assembly, interacts with CDC42 (in GTP-bound form). Interacts weakly with RAC1 and not at all with RHOA.

It localises to the cytoplasm. The protein localises to the cytoskeleton. Its subcellular location is the cell membrane. Probably involved in the organization of the actin cytoskeleton by acting downstream of CDC42, inducing actin filament assembly. Alters CDC42-induced cell shape changes. In activated T-cells, may play a role in CDC42-mediated F-actin accumulation at the immunological synapse. May play a role in early contractile events in phagocytosis in macrophages. The polypeptide is CDC42 small effector protein 1 (CDC42SE1) (Bos taurus (Bovine)).